Reading from the N-terminus, the 315-residue chain is Biotin synthase (315 aa).

The Radical SAM core domain occupies 39–266 (NSLQFATLLS…KSAIRLTAGR (228 aa)). The [4Fe-4S] cluster site is built by Cys-54, Cys-58, and Cys-61. Positions 98, 129, 189, and 261 each coordinate [2Fe-2S] cluster.

It belongs to the radical SAM superfamily. Biotin synthase family. Homodimer. The cofactor is [4Fe-4S] cluster. Requires [2Fe-2S] cluster as cofactor.

The catalysed reaction is (4R,5S)-dethiobiotin + (sulfur carrier)-SH + 2 reduced [2Fe-2S]-[ferredoxin] + 2 S-adenosyl-L-methionine = (sulfur carrier)-H + biotin + 2 5'-deoxyadenosine + 2 L-methionine + 2 oxidized [2Fe-2S]-[ferredoxin]. The protein operates within cofactor biosynthesis; biotin biosynthesis; biotin from 7,8-diaminononanoate: step 2/2. Functionally, catalyzes the conversion of dethiobiotin (DTB) to biotin by the insertion of a sulfur atom into dethiobiotin via a radical-based mechanism. The protein is Biotin synthase of Legionella pneumophila (strain Corby).